A 1023-amino-acid polypeptide reads, in one-letter code: RTX-I toxin determinant A from serotypes 5/10 (1023 aa).

Helical transmembrane passes span 226 to 256 (NNLP…ILSN), 297 to 326 (STTA…ADKF), and 367 to 406 (INSV…SGIL). Hemolysin-type calcium-binding repeat units follow at residues 730 to 747 (FGSR…DDEI), 748 to 765 (YGND…NDVI), 766 to 783 (HGGD…NDRL), 784 to 801 (IGGK…DDEL), 812 to 829 (LGGA…TNLF), and 830 to 847 (DGGV…KDIY).

Belongs to the RTX prokaryotic toxin (TC 1.C.11) family. Palmitoylated by ApxIC. The toxin only becomes active when modified.

It is found in the secreted. The protein localises to the host cell membrane. Functionally, one of the virulence factors of A.pleuropneumoniae, which has a strong hemolytic activity and is cytotoxic for alveolar macrophages and neutrophils. This chain is RTX-I toxin determinant A from serotypes 5/10 (apxIA), found in Actinobacillus pleuropneumoniae (Haemophilus pleuropneumoniae).